Reading from the N-terminus, the 192-residue chain is MPVMASYSTNEFKQGLKVMLDGNPCSIMENEYVKPGKGQAFNRVKLRNLKTGKVLEKTFKSGDSLEAADIVEVEMDYLYNDGELWNFMDPVTFEQIAADKVAMGDAAKWLKDDSNEKCSIMLFNGVPLNVSAPNFVVLKIVETDPGVRGDTSGGGGKPAKLETGAVVRVPLFVQQEDSVRVDTRTGEYLERA.

At K37 the chain carries N6-(3,6-diaminohexanoyl)-5-hydroxylysine.

Belongs to the elongation factor P family. May be beta-lysylated on the epsilon-amino group of Lys-37 by the combined action of EpmA and EpmB, and then hydroxylated on the C5 position of the same residue by EpmC (if this protein is present). Lysylation is critical for the stimulatory effect of EF-P on peptide-bond formation. The lysylation moiety may extend toward the peptidyltransferase center and stabilize the terminal 3-CCA end of the tRNA. Hydroxylation of the C5 position on Lys-37 may allow additional potential stabilizing hydrogen-bond interactions with the P-tRNA.

The protein resides in the cytoplasm. It functions in the pathway protein biosynthesis; polypeptide chain elongation. Involved in peptide bond synthesis. Alleviates ribosome stalling that occurs when 3 or more consecutive Pro residues or the sequence PPG is present in a protein, possibly by augmenting the peptidyl transferase activity of the ribosome. Modification of Lys-37 is required for alleviation. The sequence is that of Elongation factor P from Acinetobacter baylyi (strain ATCC 33305 / BD413 / ADP1).